Consider the following 471-residue polypeptide: Tryptophanase (471 aa).

N6-acetyllysine occurs at positions 5, 115, and 156. Lys270 carries the post-translational modification N6-(pyridoxal phosphate)lysine. Position 450 is an N6-acetyllysine (Lys450).

Belongs to the beta-eliminating lyase family. Homotetramer. Requires pyridoxal 5'-phosphate as cofactor.

The enzyme catalyses L-tryptophan + H2O = indole + pyruvate + NH4(+). Its pathway is amino-acid degradation; L-tryptophan degradation via pyruvate pathway; indole and pyruvate from L-tryptophan: step 1/1. The polypeptide is Tryptophanase (Escherichia coli O6:H1 (strain CFT073 / ATCC 700928 / UPEC)).